We begin with the raw amino-acid sequence, 389 residues long: Cytochrome oxidase assembly protein SHY1 (389 aa).

Topologically, residues 1–71 are mitochondrial matrix; the sequence is MSLLGARSTY…SRRERSFGKK (71 aa). Residues 72–92 traverse the membrane as a helical segment; the sequence is IVLGLMFAMPIISFYLGTWQV. The Mitochondrial intermembrane segment spans residues 93 to 341; that stretch reads RRLKWKTKLI…KPTIDLKNNH (249 aa). The disordered stretch occupies residues 292–311; sequence GTQAVDNNTSKPRSRQEMPT. Residues 342 to 362 form a helical membrane-spanning segment; the sequence is LQYLVTWYGLSFLSTIFLIVA. Topologically, residues 363-389 are mitochondrial matrix; that stretch reads LRKAKRGGVVSQDQLMKEKLKHSRKYM.

It belongs to the SURF1 family. As to quaternary structure, interacts with COA1, COX14 and MSS51.

It localises to the mitochondrion inner membrane. In terms of biological role, required for efficient assembly of cytochrome c oxidase in the mitochondrial inner membrane. Involved in a step that couples MSS51-COX14-dependent regulation of COX1 translation to early steps of cytochrome c oxidase assembly. The protein is Cytochrome oxidase assembly protein SHY1 (SHY1) of Saccharomyces cerevisiae (strain ATCC 204508 / S288c) (Baker's yeast).